Here is a 2473-residue protein sequence, read N- to C-terminus: Neurogenic locus notch homolog protein 2 (2473 aa).

An N-terminal signal peptide occupies residues 1-25; the sequence is MPALRPAALRALLWLWLCGAGPAHA. EGF-like domains follow at residues 26 to 63, 64 to 102, 105 to 143, and 144 to 180; these read LQCR…EYCQ, HRDP…EDCQ, TSHP…KQCQ, and WTDA…QKCE. The Extracellular segment spans residues 26–1679; that stretch reads LQCRGGQEPC…SELESPRNAQ (1654 aa). Intrachain disulfides connect Cys28–Cys41, Cys35–Cys51, Cys53–Cys62, Cys68–Cys79, Cys73–Cys90, Cys92–Cys101, Cys109–Cys121, Cys115–Cys131, Cys133–Cys142, Cys148–Cys159, Cys153–Cys168, Cys170–Cys179, Cys186–Cys198, Cys192–Cys207, Cys209–Cys218, Cys230–Cys246, Cys248–Cys257, Cys264–Cys275, Cys269–Cys284, Cys286–Cys295, Cys302–Cys315, Cys309–Cys324, Cys326–Cys335, Cys342–Cys353, Cys347–Cys362, Cys364–Cys373, Cys379–Cys390, Cys384–Cys401, Cys403–Cys412, Cys419–Cys433, Cys427–Cys442, Cys444–Cys453, Cys460–Cys471, Cys465–Cys480, Cys482–Cys491, Cys498–Cys509, Cys503–Cys518, Cys520–Cys529, Cys536–Cys547, Cys541–Cys556, Cys558–Cys567, Cys574–Cys584, Cys579–Cys593, Cys595–Cys604, Cys611–Cys622, Cys616–Cys631, Cys633–Cys642, Cys649–Cys659, Cys654–Cys668, Cys670–Cys679, Cys686–Cys697, Cys691–Cys706, Cys708–Cys717, Cys724–Cys734, Cys729–Cys743, Cys745–Cys754, Cys761–Cys772, Cys766–Cys781, Cys783–Cys792, Cys799–Cys810, Cys804–Cys819, Cys821–Cys830, Cys837–Cys848, Cys842–Cys859, Cys861–Cys870, Cys877–Cys888, Cys882–Cys897, Cys899–Cys908, Cys915–Cys926, Cys920–Cys935, Cys937–Cys946, Cys953–Cys964, Cys958–Cys973, Cys975–Cys984, Cys991–Cys1002, Cys996–Cys1011, Cys1013–Cys1022, Cys1029–Cys1040, Cys1034–Cys1049, Cys1051–Cys1060, Cys1067–Cys1078, Cys1072–Cys1087, and Cys1089–Cys1098. Asn46 is a glycosylation site (N-linked (GlcNAc...) asparagine). A glycan (N-linked (GlcNAc...) asparagine) is linked at Asn155. Positions 182–219 constitute an EGF-like 5; calcium-binding domain; the sequence is DINECDIPGRCQHGGTCLNLPGSYRCQCPQGFTGQHCD. The 38-residue stretch at 221–258 folds into the EGF-like 6; incomplete domain; the sequence is PYVPCAPSPCVNGGTCRQTGDFTFECNCLPGFEGSTCE. The EGF-like 7; calcium-binding domain maps to 260-296; the sequence is NIDDCPNHKCQNGGVCVDGVNTYNCRCPPQWTGQFCT. Residues 298–336 enclose the EGF-like 8; calcium-binding domain; that stretch reads DVDECLLQPNACQNGGTCTNRNGGYGCVCVNGWSGDDCS. The EGF-like 9; calcium-binding domain maps to 338-374; it reads NIDDCAYASCTPGSTCIDRVASFSCLCPEGKAGLLCH. An EGF-like 10 domain is found at 375-413; the sequence is LDDACISNPCHKGALCDTNPLNGQYICTCPQGYKGADCT. An EGF-like 11; calcium-binding domain is found at 415–454; that stretch reads DVDECAMANSNPCEHAGKCVNTDGAFHCECLKGYAGPRCE. One can recognise an EGF-like 12; calcium-binding domain in the interval 456-492; that stretch reads DINECHSDPCQNDATCLDKIGGFTCLCMPGFKGVHCE. One can recognise an EGF-like 13; calcium-binding domain in the interval 494-530; it reads EVNECQSNPCVNNGQCVDKVNRFQCLCPPGFTGPVCQ. Residues 532 to 568 enclose the EGF-like 14; calcium-binding domain; sequence DIDDCSSTPCLNGAKCIDHPNGYECQCATGFTGILCD. In terms of domain architecture, EGF-like 15; calcium-binding spans 570 to 605; that stretch reads NIDNCDPDPCHHGQCQDGIDSYTCICNPGYMGAICS. The region spanning 607-643 is the EGF-like 16; calcium-binding domain; sequence QIDECYSSPCLNDGRCIDLVNGYQCNCQPGTSGLNCE. Ser613 carries O-linked (Glc...) serine; alternate glycosylation. An O-linked (Xyl...) serine; alternate glycan is attached at Ser613. The EGF-like 17; calcium-binding domain occupies 645–680; sequence NFDDCASNPCMHGVCVDGINRYSCVCSPGFTGQRCN. One can recognise an EGF-like 18; calcium-binding domain in the interval 682-718; it reads DIDECASNPCRKGATCINDVNGFRCICPEGPHHPSCY. One can recognise an EGF-like 19 domain in the interval 720 to 755; sequence QVNECLSNPCIHGNCTGGLSGYKCLCDAGWVGVNCE. Asn733 carries N-linked (GlcNAc...) asparagine glycosylation. The EGF-like 20; calcium-binding domain occupies 757 to 793; sequence DKNECLSNPCQNGGTCNNLVNGYRCTCKKGFKGYNCQ. Residues 795–831 form the EGF-like 21; calcium-binding domain; it reads NIDECASNPCLNQGTCFDDVSGYTCHCMLPYTGKNCQ. An EGF-like 22 domain is found at 833–871; that stretch reads VLAPCSPNPCENAAVCKEAPNFESFSCLCAPGWQGKRCT. Residues 873 to 909 form the EGF-like 23; calcium-binding domain; the sequence is DVDECISKPCMNNGVCHNTQGSYVCECPPGFSGMDCE. In terms of domain architecture, EGF-like 24; calcium-binding spans 911-947; sequence DINDCLANPCQNGGSCVDHVNTFSCQCHPGFIGDKCQ. One can recognise an EGF-like 25; calcium-binding domain in the interval 949 to 985; the sequence is DMNECLSEPCKNGGTCSDYVNSYTCTCPAGFHGVHCE. One can recognise an EGF-like 26; calcium-binding domain in the interval 987–1023; sequence NIDECTESSCFNGGTCVDGINSFSCLCPVGFTGPFCL. The 37-residue stretch at 1025–1061 folds into the EGF-like 27; calcium-binding domain; it reads DINECSSNPCLNAGTCVDGLGTYRCICPLGYTGKNCQ. EGF-like domains lie at 1063 to 1099 and 1101 to 1147; these read LVNL…AYCD and LNVS…SYCE. Asn1102 carries an N-linked (GlcNAc...) asparagine glycan. 24 cysteine pairs are disulfide-bonded: Cys1105-Cys1126, Cys1120-Cys1135, Cys1137-Cys1146, Cys1153-Cys1164, Cys1158-Cys1173, Cys1175-Cys1184, Cys1191-Cys1202, Cys1196-Cys1211, Cys1213-Cys1222, Cys1229-Cys1241, Cys1235-Cys1250, Cys1252-Cys1261, Cys1268-Cys1281, Cys1273-Cys1290, Cys1292-Cys1301, Cys1308-Cys1319, Cys1313-Cys1331, Cys1333-Cys1346, Cys1378-Cys1389, Cys1383-Cys1400, Cys1402-Cys1411, Cys1425-Cys1448, Cys1430-Cys1443, and Cys1439-Cys1455. Residues 1149 to 1185 form the EGF-like 30; calcium-binding domain; the sequence is QLDECASNPCQHGATCNDFIGGYRCECVPGYQGVNCE. The region spanning 1187 to 1223 is the EGF-like 31; calcium-binding domain; the sequence is EVDECQNQPCQNGGTCIDLVNHFKCSCPPGTRGLLCE. The EGF-like 32; calcium-binding domain occupies 1225 to 1262; the sequence is NIDECAGGPHCLNGGQCVDRIGGYTCRCLPGFAGERCE. EGF-like domains follow at residues 1264–1302, 1304–1343, and 1375–1412; these read DINE…RHCE, FLDV…ARCQ, and ESGC…SHCE. 3 LNR repeats span residues 1425-1465, 1466-1502, and 1503-1544; these read CQSQ…PWAN, CTST…NSKT, and CKYD…NLAE. A negative regulatory region (NRR) region spans residues 1425–1679; it reads CQSQYCADKA…SELESPRNAQ (255 aa). A glycan (N-linked (GlcNAc...) asparagine) is linked at Asn1465. Cystine bridges form between Cys1466/Cys1489, Cys1472/Cys1484, Cys1480/Cys1496, Cys1503/Cys1527, Cys1509/Cys1522, Cys1518/Cys1534, and Cys1634/Cys1641. A helical membrane pass occupies residues 1680–1700; it reads LLYLLAVAVVIILFFILLGVI. At 1701-2473 the chain is on the cytoplasmic side; the sequence is MAKRKRKHGF…PPHSNMQVYA (773 aa). At Thr1718 the chain carries Phosphothreonine. Residues 1755-1778 form a disordered region; that stretch reads GTSEHWVDDEGPQPKKAKAEDEAL. Phosphoserine is present on Ser1780. Residue Thr1803 is modified to Phosphothreonine. Position 1805 is a phosphoserine (Ser1805). Thr1809 carries the post-translational modification Phosphothreonine. ANK repeat units lie at residues 1828 to 1872, 1877 to 1906, 1910 to 1940, 1944 to 1973, 1977 to 2006, and 2010 to 2039; these read DGCT…SLQA, TGEM…DANA, MGRC…DLDA, DGTT…DVNA, HGKS…NRDM, and KEET…NRDI. Phosphoserine occurs at positions 1843 and 1846. A phosphoserine mark is found at Ser2071, Ser2079, and Ser2082. Thr2098 carries the post-translational modification Phosphothreonine. Disordered regions lie at residues 2098–2117, 2122–2169, and 2382–2473; these read TPMG…PTSL, KEAK…TSSP, and VGKY…QVYA. Residues 2099–2108 are compositionally biased toward basic residues; sequence PMGKKARRPN. 2 stretches are compositionally biased toward polar residues: residues 2140-2151 and 2390-2400; these read VQLSESSVTLSP and SQHSYASSNAA. The span at 2419-2446 shows a compositional bias: low complexity; it reads PSPESPDQWSSSSPHSASDWSDVTTSPT. The span at 2447-2456 shows a compositional bias: gly residues; sequence PGGGGGGQRG.

Belongs to the NOTCH family. Heterodimer of a C-terminal fragment N(TM) and an N-terminal fragment N(EC) which are probably linked by disulfide bonds. Interacts with MAML1, MAML2 and MAML3 which act as transcriptional coactivators for NOTCH2. Interacts with RELA/p65. Interacts with HIF1AN. Interacts (via ANK repeats) with TCIM, the interaction inhibits the nuclear translocation of NOTCH2 N2ICD. Interacts with CUL1, RBX1, SKP1 and FBXW7 that are SCF(FBXW7) E3 ubiquitin-protein ligase complex components. Interacts with MINAR1; this interaction increases MINAR1 stability and function. Interacts with MDK; this interaction mediates a nuclear accumulation of NOTCH2 and therefore activation of NOTCH2 signaling leading to interaction between HES1 and STAT3. Interacts with MINAR2. Synthesized in the endoplasmic reticulum as an inactive form which is proteolytically cleaved by a furin-like convertase in the trans-Golgi network before it reaches the plasma membrane to yield an active, ligand-accessible form. Cleavage results in a C-terminal fragment N(TM) and a N-terminal fragment N(EC). Following ligand binding, it is cleaved by TNF-alpha converting enzyme (TACE) to yield a membrane-associated intermediate fragment called notch extracellular truncation (NEXT). This fragment is then cleaved by presenilin dependent gamma-secretase to release a notch-derived peptide containing the intracellular domain (NICD) from the membrane. Post-translationally, hydroxylated by HIF1AN. In terms of processing, can be either O-glucosylated or O-xylosylated at Ser-613 by POGLUT1. Phosphorylated by GSK3. GSK3-mediated phosphorylation is necessary for NOTCH2 recognition by FBXW7, ubiquitination and degradation via the ubiquitin proteasome pathway. In terms of tissue distribution, expressed in the brain, liver, kidney, neuroepithelia, somites, optic vesicles and branchial arches, but not heart.

It localises to the cell membrane. Its subcellular location is the nucleus. It is found in the cytoplasm. Its function is as follows. Functions as a receptor for membrane-bound ligands Jagged-1 (JAG1), Jagged-2 (JAG2) and Delta-1 (DLL1) to regulate cell-fate determination. Upon ligand activation through the released notch intracellular domain (NICD) it forms a transcriptional activator complex with RBPJ/RBPSUH and activates genes of the enhancer of split locus. Affects the implementation of differentiation, proliferation and apoptotic programs. May play an essential role in postimplantation development, probably in some aspect of cell specification and/or differentiation. In collaboration with RELA/p65 enhances NFATc1 promoter activity and positively regulates RANKL-induced osteoclast differentiation. Positively regulates self-renewal of liver cancer cells. This chain is Neurogenic locus notch homolog protein 2, found in Mus musculus (Mouse).